Reading from the N-terminus, the 476-residue chain is Glutamyl-tRNA(Gln) amidotransferase subunit A (476 aa).

Active-site charge relay system residues include K70 and S145. The active-site Acyl-ester intermediate is the S169.

Belongs to the amidase family. GatA subfamily. As to quaternary structure, heterotrimer of A, B and C subunits.

It catalyses the reaction L-glutamyl-tRNA(Gln) + L-glutamine + ATP + H2O = L-glutaminyl-tRNA(Gln) + L-glutamate + ADP + phosphate + H(+). Its function is as follows. Allows the formation of correctly charged Gln-tRNA(Gln) through the transamidation of misacylated Glu-tRNA(Gln) in organisms which lack glutaminyl-tRNA synthetase. The reaction takes place in the presence of glutamine and ATP through an activated gamma-phospho-Glu-tRNA(Gln). This chain is Glutamyl-tRNA(Gln) amidotransferase subunit A, found in Methanosarcina mazei (strain ATCC BAA-159 / DSM 3647 / Goe1 / Go1 / JCM 11833 / OCM 88) (Methanosarcina frisia).